Here is a 211-residue protein sequence, read N- to C-terminus: LexA repressor (211 aa).

The H-T-H motif DNA-binding region spans 30–50 (RVEIAREIGFKSPNAAEEHLK). Catalysis depends on for autocatalytic cleavage activity residues Ser-128 and Lys-165.

It belongs to the peptidase S24 family. As to quaternary structure, homodimer.

It catalyses the reaction Hydrolysis of Ala-|-Gly bond in repressor LexA.. Represses a number of genes involved in the response to DNA damage (SOS response), including recA and lexA. In the presence of single-stranded DNA, RecA interacts with LexA causing an autocatalytic cleavage which disrupts the DNA-binding part of LexA, leading to derepression of the SOS regulon and eventually DNA repair. In Haemophilus ducreyi (strain 35000HP / ATCC 700724), this protein is LexA repressor.